We begin with the raw amino-acid sequence, 374 residues long: Relaxin-3 receptor 2 (374 aa).

The Extracellular portion of the chain corresponds to 1-43; sequence MPTLNTSASPPTFFWANASGGSVLSADDAPMPVKFLALRLMVA. N-linked (GlcNAc...) asparagine glycans are attached at residues asparagine 5 and asparagine 17. The chain crosses the membrane as a helical span at residues 44-64; the sequence is LAYGLVGAIGLLGNLAVLWVL. Over 65 to 78 the chain is Cytoplasmic; that stretch reads SNCARRAPGPPSDT. The chain crosses the membrane as a helical span at residues 79–99; sequence FVFNLALADLGLALTLPFWAA. Residues 100-116 lie on the Extracellular side of the membrane; that stretch reads ESALDFHWPFGGALCKM. An intrachain disulfide couples cysteine 114 to cysteine 191. The helical transmembrane segment at 117-137 threads the bilayer; sequence VLTATVLNVYASIFLITALSV. Over 138–154 the chain is Cytoplasmic; that stretch reads ARYWVVAMAAGPGTHLS. Residues 155-175 traverse the membrane as a helical segment; it reads LFWARIATLAVWAAAALVTVP. Over 176-209 the chain is Extracellular; that stretch reads TAVFGVEGEVCGVRLCLLRFPSRYWLGAYQLQRV. The helical transmembrane segment at 210-230 threads the bilayer; it reads VLAFMVPLGVITTSYLLLLAF. At 231–249 the chain is on the cytoplasmic side; sequence LQRRQRRRQDSRVVARSVR. A helical membrane pass occupies residues 250-270; it reads ILVASFFLCWFPNHVVTLWGV. The Extracellular segment spans residues 271–281; the sequence is LVKFDLVPWNS. The chain crosses the membrane as a helical span at residues 282–302; the sequence is TFYTIQTYVFPVTTCLAHSNS. Residues 303–374 lie on the Cytoplasmic side of the membrane; that stretch reads CLNPVLYCLL…LTNLDRGTPG (72 aa).

The protein belongs to the G-protein coupled receptor 1 family. Expressed in a broader range of tissues including brain, kidney, testis, thymus, placenta, prostate, salivary gland, thyroid and colon.

The protein localises to the cell membrane. In terms of biological role, high affinity receptor for INSL5. Also acts as a receptor for RLN3/relaxin-3, as well as bradykinin and kallidin. Binding of the ligand inhibit cAMP accumulation. The protein is Relaxin-3 receptor 2 (RXFP4) of Homo sapiens (Human).